A 129-amino-acid polypeptide reads, in one-letter code: Small ribosomal subunit protein uS11c (129 aa).

The protein belongs to the universal ribosomal protein uS11 family. In terms of assembly, part of the 30S ribosomal subunit.

It localises to the plastid. Its subcellular location is the chloroplast. The polypeptide is Small ribosomal subunit protein uS11c (Oltmannsiellopsis viridis (Marine flagellate)).